Here is a 350-residue protein sequence, read N- to C-terminus: Biotin synthase 1 (350 aa).

One can recognise a Radical SAM core domain in the interval 71-296; sequence EEVEVEGIIS…KTILRFAGGR (226 aa). The [4Fe-4S] cluster site is built by Cys86, Cys90, and Cys93. [2Fe-2S] cluster is bound by residues Cys129, Cys221, and Arg291.

It belongs to the radical SAM superfamily. Biotin synthase family. Homodimer. [4Fe-4S] cluster is required as a cofactor. Requires [2Fe-2S] cluster as cofactor.

It carries out the reaction (4R,5S)-dethiobiotin + (sulfur carrier)-SH + 2 reduced [2Fe-2S]-[ferredoxin] + 2 S-adenosyl-L-methionine = (sulfur carrier)-H + biotin + 2 5'-deoxyadenosine + 2 L-methionine + 2 oxidized [2Fe-2S]-[ferredoxin]. The protein operates within cofactor biosynthesis; biotin biosynthesis; biotin from 7,8-diaminononanoate: step 2/2. Catalyzes the conversion of dethiobiotin (DTB) to biotin by the insertion of a sulfur atom into dethiobiotin via a radical-based mechanism. The chain is Biotin synthase 1 from Corynebacterium diphtheriae (strain ATCC 700971 / NCTC 13129 / Biotype gravis).